The primary structure comprises 435 residues: Large ribosomal subunit protein mL65 (435 aa).

This sequence belongs to the mitochondrion-specific ribosomal protein mL65 family. Component of the mitochondrial ribosome small subunit (28S) which comprises a 12S rRNA and about 30 distinct proteins.

The protein resides in the mitochondrion. The chain is Large ribosomal subunit protein mL65 (MRPS30) from Bos taurus (Bovine).